The following is a 314-amino-acid chain: Bifunctional riboflavin kinase/FMN adenylyltransferase (314 aa).

The protein belongs to the RibF family.

The catalysed reaction is riboflavin + ATP = FMN + ADP + H(+). The enzyme catalyses FMN + ATP + H(+) = FAD + diphosphate. Its pathway is cofactor biosynthesis; FAD biosynthesis; FAD from FMN: step 1/1. It functions in the pathway cofactor biosynthesis; FMN biosynthesis; FMN from riboflavin (ATP route): step 1/1. Its function is as follows. Catalyzes the phosphorylation of riboflavin to FMN followed by the adenylation of FMN to FAD. Can also catalyze the phosphorylation of the toxic riboflavin analogs 8-demethyl-8-aminoriboflavin (AF) to 8-demethyl-8-aminoriboflavin mononucleotide (AFMN) and roseoflavin (RoF) to roseoflavin mononucleotide (RoFMN), and the adenylation of AFMN to 8-demethyl-8-aminoriboflavin adenine dinucleotide (AFAD). The polypeptide is Bifunctional riboflavin kinase/FMN adenylyltransferase (Listeria monocytogenes serovar 1/2a (strain ATCC BAA-679 / EGD-e)).